The sequence spans 568 residues: 2-succinyl-5-enolpyruvyl-6-hydroxy-3-cyclohexene-1-carboxylate synthase (568 aa).

Belongs to the TPP enzyme family. MenD subfamily. As to quaternary structure, homodimer. Mg(2+) serves as cofactor. Requires Mn(2+) as cofactor. The cofactor is thiamine diphosphate.

It catalyses the reaction isochorismate + 2-oxoglutarate + H(+) = 5-enolpyruvoyl-6-hydroxy-2-succinyl-cyclohex-3-ene-1-carboxylate + CO2. The protein operates within quinol/quinone metabolism; 1,4-dihydroxy-2-naphthoate biosynthesis; 1,4-dihydroxy-2-naphthoate from chorismate: step 2/7. It functions in the pathway cofactor biosynthesis; phylloquinone biosynthesis. In terms of biological role, catalyzes the thiamine diphosphate-dependent decarboxylation of 2-oxoglutarate and the subsequent addition of the resulting succinic semialdehyde-thiamine pyrophosphate anion to isochorismate to yield 2-succinyl-5-enolpyruvyl-6-hydroxy-3-cyclohexene-1-carboxylate (SEPHCHC). This Synechococcus sp. (strain CC9902) protein is 2-succinyl-5-enolpyruvyl-6-hydroxy-3-cyclohexene-1-carboxylate synthase.